Here is a 323-residue protein sequence, read N- to C-terminus: MYQPPDAGHWTGRIDSVKDERAFRLHQRIRLLDLSQPLETAAERAAAFIGFACDEGVRRNQGRQGAKEAPAAVKAALARLPWHLPEGVVVYDAGDVVCIDERLEQSQTELGKAVARLLKNGMASIVIGGGHETAYGHYLGVREALGTDARLGILNIDAHFDLRPYDDGPTSGTMFRQILDQDDQVSYFCLGIQRLGNTAALFADAETYRCRYMLEDELTAGPIEAAYEQIEKFAADHDAVMLTFCMDAISAAAAPGVSAPSPFGLAPSLARALIRRIVSHPKTISVDLCEVNPLLDEGGKTVALAAAFCMEALLHFQRLQPRR.

The Mn(2+) site is built by His-131, Asp-157, His-159, Asp-161, Cys-245, and Asp-247.

This sequence belongs to the arginase family. It depends on Mn(2+) as a cofactor.

It carries out the reaction N-formimidoyl-L-glutamate + H2O = formamide + L-glutamate. It functions in the pathway amino-acid degradation; L-histidine degradation into L-glutamate; L-glutamate from N-formimidoyl-L-glutamate (hydrolase route): step 1/1. Catalyzes the conversion of N-formimidoyl-L-glutamate to L-glutamate and formamide. This Geobacillus kaustophilus (strain HTA426) protein is Formimidoylglutamase.